A 1188-amino-acid chain; its full sequence is MSSSSSDENETTIHRTGSNTGGSGIYSQPRAGSSKRTSNVRHDVSDVDDEEEHYARFREDTAIEVDDAITVLLSSLHFEHKRDIVPTDEDDNKLRELHEKIFALITSESDVNRKRRLKKALPASNCVREQVYYLRRKPSTPPASYYHRLNAALHTIVKESFGEEYRKVATVLGLVEALAEVLILEVHTFGINETNPGEHRNIRKLIANALTNLTYGQIHSKRRLCSYDGFIRCVVRIVIESPNITQVYAGLIRNLSWNADSGMSEALQPTVHALSIAAVHAHTHRFDVTATLSALWNLAGHSVENKRTICDTPNCLKVLASLLSPDARFTSLVDSATGILKYVSQYLANTSTHLELRSLLITRMLTLLKSASFTCVTNTLGAIANLIVKDPHMQQMIRQDMAAVQQLNVLRNSNRDDIRTAVKSVLNTLNQPCSHRYGDMSHSVGGGATGMQMLSEPQLQMQTSHHAYHGTASPRLLSLRATRASPGKYIQPQAQQQLIQTPQVDQRSSSLPRHFAVQRNGFVMAQSYNQQMDQHQQQQMIYQLQQQQQIMFQTEDQAQMEHHQQIMYLQQQQQQFHQIQQQQQMQKAQEADPVPPTDDDLDIPTSTVMGTRSNSERSLGSMNPGSVMTNWNSSLDTAANSSRALSPVSYNDIPASPTMCAQVFNLPKSTESEHHQLTSQQQNTTHYSSGSANTMTRSDGATTVPMDNIITPTYAILNPILVHEQTPNGTVPRKTSEELDSPDDVLPGPSLEEEEGDYAIIGGAAQKTDDELLTRSIQSEMPTSSSTPKMKVSPRLNGFFSPTQKTTSSPAWSHPDTSPIPKSSSHRTQPNRRQDASDADRLLMESIMSEMPKSRIISPRLAGTQQYLEPEPERRSHSKNEEADRRDAFTASHEPSDHNGIDVARGSDWSPQQQLHRMESLESQASSEDSFGLTAEEPNSSTSGAAANTMRFDDEIDASLPMDCVDDDDYDYTYDHFEDYEDEEDPDATQFDDGVDAQLTIDCSMISSGSGSSQRNETTTTSRDSKALATSTPKGSASSLPGVRQATRVSTNGKSRLPVPKTNGSLVDKNPKPIIASRRPRLPPKPTLLKDKHYPEEDSIENQTRDDTIYVNAPVVEAEQERIYMNALKQQKNIEQSPSIGNGSPIAKSAIVTPYNYQKPPFTGRNNGEMSNEKSVTPNPKQMLVTIV.

The interval 1–50 is disordered; the sequence is MSSSSSDENETTIHRTGSNTGGSGIYSQPRAGSSKRTSNVRHDVSDVDDE. Positions 1 to 486 are required for interaction with bar-1 and hmp-2; sequence MSSSSSDENE…LSLRATRASP (486 aa). An ARM repeat occupies 314 to 358; it reads NCLKVLASLLSPDARFTSLVDSATGILKYVSQYLANTSTHLELRS. The segment covering 579–588 has biased composition (low complexity); that stretch reads IQQQQQMQKA. 6 disordered regions span residues 579–624, 670–702, 726–751, 778–952, 1003–1092, and 1157–1181; these read IQQQ…SMNP, TESEHHQLTSQQQNTTHYSSGSANTMTRSDGAT, TPNGTVPRKTSEELDSPDDVLPGPSL, QSEM…TMRF, CSMI…LKDK, and YQKPPFTGRNNGEMSNEKSVTPNPK. Positions 600-1188 are required for interaction with pry-1; it reads DLDIPTSTVM…NPKQMLVTIV (589 aa). Composition is skewed to polar residues over residues 604–624 and 677–701; these read PTSTVMGTRSNSERSLGSMNP and LTSQQQNTTHYSSGSANTMTRSDGA. Composition is skewed to polar residues over residues 778–788 and 800–811; these read QSEMPTSSSTP and FSPTQKTTSSPA. 2 stretches are compositionally biased toward basic and acidic residues: residues 832–843 and 871–900; these read RRQDASDADRLL and EPERRSHSKNEEADRRDAFTASHEPSDHNG. 4 stretches are compositionally biased toward polar residues: residues 909–929, 937–946, 1014–1039, and 1164–1180; these read WSPQQQLHRMESLESQASSED, EPNSSTSGAA, QRNETTTTSRDSKALATSTPKGSASS, and GRNNGEMSNEKSVTPNP.

It belongs to the adenomatous polyposis coli (APC) family. As to quaternary structure, interacts (via N-terminus) with bar-1 and hmp-2; the interaction with hmp-2 is relatively weak. Interacts (via C-terminus) with pry-1 (via N-terminus). Probably associates with bar-1, gsk-3, pry-1 in a complex. As to expression, during the L1 stage, expressed in vulval precursor cells (P3-8.p), seam cells and excretory cells.

The protein localises to the cell junction. It is found in the adherens junction. Its subcellular location is the cytoplasm. It localises to the nucleus. In terms of biological role, has a role in endoderm cell specification and pharyngeal development. Required for the migration of epithelial cells, organization of the anterior seam cells and ceh-13 expression during embryo morphogenesis. Prevents hyperactivation of the Wnt signaling pathway during endoderm development, probably by preventing hmp-2 nuclear translocation. During larval development, apr-1 is required for expression of lin-39 in P3-8.p. Shown to negatively regulate Wnt signaling in vulval precursor cells. Has a role in cell division by establishing the polarity of the mother cell which forms the asymmetries of the daughter nuclei. During the L4 larval stage, it is required for the asymmetric division and self-renewal of seam cells. Thought to regulate export of wrm-1 from the nucleus possibly as part of a complex involving pry-1. In Caenorhabditis elegans, this protein is Adenomatous polyposis coli protein-related protein 1.